Here is a 354-residue protein sequence, read N- to C-terminus: Protein Wnt-11 (354 aa).

Residues 1–24 (MKPSPQFFLAAFLSLILQTGICYG) form the signal peptide. 2 N-linked (GlcNAc...) asparagine glycosylation sites follow: Asn-40 and Asn-90. 11 disulfide bridges follow: Cys-80-Cys-91, Cys-130-Cys-138, Cys-140-Cys-157, Cys-209-Cys-223, Cys-211-Cys-218, Cys-283-Cys-314, Cys-299-Cys-309, Cys-313-Cys-353, Cys-329-Cys-344, Cys-331-Cys-341, and Cys-336-Cys-337. A lipid anchor (O-palmitoleoyl serine; by PORCN) is attached at Ser-215. N-linked (GlcNAc...) asparagine glycosylation is found at Asn-300 and Asn-304.

The protein belongs to the Wnt family. Post-translationally, palmitoleoylation is required for efficient binding to frizzled receptors. Depalmitoleoylation leads to Wnt signaling pathway inhibition. In terms of tissue distribution, expressed in the dermatome. The expression domain is mutually exclusive to the other Wnt genes.

The protein localises to the secreted. It is found in the extracellular space. Its subcellular location is the extracellular matrix. Its function is as follows. Ligand for members of the frizzled family of seven transmembrane receptors. May play a role in the formation of dermal structure, both limb and feather buds. Is likely to signal over only few cell diameters. In Gallus gallus (Chicken), this protein is Protein Wnt-11 (WNT11).